A 442-amino-acid chain; its full sequence is Ankyrin repeat and MYND domain-containing protein 2 (442 aa).

3 ANK repeats span residues 45–74 (NGMT…DVNC), 79–108 (HGYT…ETDV), and 159–188 (KLAG…NPLL). Cysteine 320, cysteine 323, cysteine 332, cysteine 335, cysteine 341, cysteine 345, histidine 353, and cysteine 357 together coordinate Zn(2+). An MYND-type zinc finger spans residues 320–357 (CTTCGEKGASKRCSVCKMVIYCDQTCQKTHWFAHKKIC). Residues 401–421 (TRICQKNDNPKDSEEGEKESL) show a composition bias toward basic and acidic residues. Residues 401-442 (TRICQKNDNPKDSEEGEKESLQSDAGLEGLQEAAVGPQVSEE) are disordered.

Interacts with the retinal-specific guanylyl cyclase GC1.

It localises to the cell projection. Its subcellular location is the cilium. Its function is as follows. May be involved in the trafficking of signaling proteins to the cilia. The sequence is that of Ankyrin repeat and MYND domain-containing protein 2 (ANKMY2) from Bos taurus (Bovine).